The primary structure comprises 178 residues: Large ribosomal subunit protein uL16 (178 aa).

The protein belongs to the universal ribosomal protein uL16 family.

The protein is Large ribosomal subunit protein uL16 of Saccharolobus solfataricus (strain ATCC 35092 / DSM 1617 / JCM 11322 / P2) (Sulfolobus solfataricus).